A 139-amino-acid polypeptide reads, in one-letter code: Putative nickel-responsive regulator (139 aa).

The Ni(2+) site is built by His-79, His-90, His-92, and Cys-98.

This sequence belongs to the transcriptional regulatory CopG/NikR family. It depends on Ni(2+) as a cofactor.

Functionally, transcriptional regulator. This chain is Putative nickel-responsive regulator, found in Geobacter sulfurreducens (strain ATCC 51573 / DSM 12127 / PCA).